The primary structure comprises 132 residues: Small ribosomal subunit protein uS11 (132 aa).

It belongs to the universal ribosomal protein uS11 family. In terms of assembly, part of the 30S ribosomal subunit. Interacts with proteins S7 and S18. Binds to IF-3.

Located on the platform of the 30S subunit, it bridges several disparate RNA helices of the 16S rRNA. Forms part of the Shine-Dalgarno cleft in the 70S ribosome. In Alkaliphilus metalliredigens (strain QYMF), this protein is Small ribosomal subunit protein uS11.